Reading from the N-terminus, the 312-residue chain is uncharacterized protein (312 aa).

An N-terminal signal peptide occupies residues 1–19 (MFSKYLVTASSLFVALTSA).

This is an uncharacterized protein from Saccharomyces cerevisiae (strain ATCC 204508 / S288c) (Baker's yeast).